The sequence spans 64 residues: Conotoxin LiC121 (64 aa).

Positions 1-22 (MRCVPVFIILLLLSPSAPSVDA) are cleaved as a signal peptide. A propeptide spanning residues 23–48 (HPKTKDDVPLASFHDDAKRTLQRLWI) is cleaved from the precursor.

It belongs to the conotoxin T superfamily. Post-translationally, contains 2 disulfide bonds that can be either 'C1-C3, C2-C4' or 'C1-C4, C2-C3', since these disulfide connectivities have been observed for conotoxins with cysteine framework V (for examples, see AC P0DQQ7 and AC P81755). Expressed by the venom duct.

The protein resides in the secreted. In Conus lividus (Livid cone), this protein is Conotoxin LiC121.